Consider the following 599-residue polypeptide: Translation initiation factor IF-2 (599 aa).

One can recognise a tr-type G domain in the interval 111–278 (PRPPIITVMG…SILLLAEILE (168 aa)). Residues 120–127 (GHVDHGKT) are G1. Residue 120–127 (GHVDHGKT) participates in GTP binding. The tract at residues 145-149 (GITQH) is G2. Residues 166-169 (DTPG) are G3. GTP-binding positions include 166–170 (DTPGH) and 220–223 (NKMD). The segment at 220–223 (NKMD) is G4. Residues 256–258 (SAL) form a G5 region.

The protein belongs to the TRAFAC class translation factor GTPase superfamily. Classic translation factor GTPase family. IF-2 subfamily.

Its subcellular location is the cytoplasm. One of the essential components for the initiation of protein synthesis. Protects formylmethionyl-tRNA from spontaneous hydrolysis and promotes its binding to the 30S ribosomal subunits. Also involved in the hydrolysis of GTP during the formation of the 70S ribosomal complex. The sequence is that of Translation initiation factor IF-2 from Mesomycoplasma hyopneumoniae (strain 7448) (Mycoplasma hyopneumoniae).